A 151-amino-acid polypeptide reads, in one-letter code: MRVWIDADACPKMAKELVVKFALKRRFEVVLVAGQPQSKPALALVKLIVVPSGPDAADDYLVEHAVPGELVICSDIPLADRLVKKGVAALDPRGKEFDAQNMGERLATRNLFTDLREQGQVSGGPAPFGDREKQAFANALDRILTRLARQS.

The protein belongs to the UPF0178 family.

The protein is UPF0178 protein Pfl01_5469 of Pseudomonas fluorescens (strain Pf0-1).